The following is a 361-amino-acid chain: MADAPTFNAQPCDIITQLVLGPVSPRVRNARQASADRWMEIETILHESTRHDGVAPFSEQFLRGMEEPDLNHWHALVRVDGHVRGIAAVDPSGPAVELAVHPSYRRGGLATALQRAVRAHASSLGLGDERDIHTNGIGLTWWAHGDLPPARAAAEHIGATADRELLVMELPGSVVKDESDNNPVAQAAATLPDDVTVLSWTESARRWGKDAVDAAWLAVNNEAFDWHPEQGGWDQARLDQARRASWYDPDGVLLLWGSEGDQKDGDTDSLPPLLGFHWTKLAREGDDETGRKVGEVYVIGLARKAQGRGLGRASTAKGIQYLASNDAAYVELYVEADNAPAVHAYEALGFTVVERHTAWKF.

2 N-acetyltransferase domains span residues 25–173 and 195–361; these read PRVR…LPGS and VTVL…AWKF. Residue E59 coordinates 1D-myo-inositol 2-(L-cysteinylamino)-2-deoxy-alpha-D-glucopyranoside. Position 98–100 (98–100) interacts with acetyl-CoA; sequence LAV. 1D-myo-inositol 2-(L-cysteinylamino)-2-deoxy-alpha-D-glucopyranoside contacts are provided by E229, K280, and E295. Residues 299–301 and 306–312 each bind acetyl-CoA; these read IGL and QGRGLGR. Residue Y333 participates in 1D-myo-inositol 2-(L-cysteinylamino)-2-deoxy-alpha-D-glucopyranoside binding. Acetyl-CoA is bound at residue 338–343; the sequence is NAPAVH.

This sequence belongs to the acetyltransferase family. MshD subfamily. Monomer.

The catalysed reaction is 1D-myo-inositol 2-(L-cysteinylamino)-2-deoxy-alpha-D-glucopyranoside + acetyl-CoA = mycothiol + CoA + H(+). In terms of biological role, catalyzes the transfer of acetyl from acetyl-CoA to desacetylmycothiol (Cys-GlcN-Ins) to form mycothiol. This chain is Mycothiol acetyltransferase, found in Corynebacterium kroppenstedtii (strain DSM 44385 / JCM 11950 / CIP 105744 / CCUG 35717).